Consider the following 289-residue polypeptide: Ribosomal protein L11 methyltransferase (289 aa).

Residues Thr135, Gly156, Asp179, and Asn225 each contribute to the S-adenosyl-L-methionine site.

This sequence belongs to the methyltransferase superfamily. PrmA family.

The protein localises to the cytoplasm. It carries out the reaction L-lysyl-[protein] + 3 S-adenosyl-L-methionine = N(6),N(6),N(6)-trimethyl-L-lysyl-[protein] + 3 S-adenosyl-L-homocysteine + 3 H(+). Its function is as follows. Methylates ribosomal protein L11. The sequence is that of Ribosomal protein L11 methyltransferase from Chlorobaculum tepidum (strain ATCC 49652 / DSM 12025 / NBRC 103806 / TLS) (Chlorobium tepidum).